The following is a 551-amino-acid chain: MTDTPNSPSKNTTKSASSSTKVIDSLHSKIDQLTDELTALKQSHQELTKKHSITAKKNDSFVDQLANAKHENDMLSALLKRKERRILDLEDQFNELTSQNESLVLSNKNMKIRCDNLQSNSNANIAEFERLKISYDALIASQMEYKNHYQQELNNLQIAFDNYKLENTKRFEELQTSIVNNDKDIDTLLDSLTNKRKAMDNIYVNKNNKVLQLLGNLAHLAKLHGQDTKSQVEQNLNIIEQLLVKYPDLQEKILEKEKIEIDLTEIIAHSNDVLTNSSFDEDTTLINSPDLENNHNFNNHNTSGSATPNNNNHNNNSNSHSLQSKKRKNYKRNSLILKESPPIISENVPSSLPKKPQVNNNLINIPKSRSKFNTPPTTPRQTTPRQFTNHNNDFEITHQWSSNNNNNNNNNNNNHRRNNSVDSRSDNGHHPHRRNNSYDSRPDHGQQHRRQPSQQNNNYNNNNYNNNNNNNNNINNNSNGFVKRSGSVRNGNNYNNNNGNGNGNGNGNANNNANNHGNKSKRRSTYNNNNNNNNNSKRNSQLFDNNFALNV.

2 disordered regions span residues 1–22 (MTDTPNSPSKNTTKSASSSTKV) and 285–551 (LINS…ALNV). Low complexity-rich tracts occupy residues 7–21 (SPSKNTTKSASSSTK), 309–321 (NNNNHNNNSNSHS), 372–389 (FNTPPTTPRQTTPRQFTN), 401–413 (SSNNNNNNNNNNN), 456–479 (NNNYNNNNYNNNNNNNNNINNNSN), 490–499 (NGNNYNNNNG), 507–517 (GNANNNANNHG), and 525–540 (TYNNNNNNNNNSKRNS). Residues 20 to 110 (TKVIDSLHSK…ESLVLSNKNM (91 aa)) adopt a coiled-coil conformation. Residues 541–551 (QLFDNNFALNV) are compositionally biased toward polar residues.

The protein belongs to the SHE3 family.

The protein resides in the endoplasmic reticulum membrane. Functionally, RNA-binding protein that binds specific mRNAs including the ASH1 mRNA, coding for a repressor of the HO endonuclease. Part of the mRNA localization machinery that restricts accumulation of certain proteins to the bud and in the daughter cell. Required for the delivery of cortical endoplasmic reticulum into the emerging bud. This is SWI5-dependent HO expression protein 3 (SHE3) from Candida dubliniensis (strain CD36 / ATCC MYA-646 / CBS 7987 / NCPF 3949 / NRRL Y-17841) (Yeast).